Here is a 93-residue protein sequence, read N- to C-terminus: Small ribosomal subunit protein uS19 (93 aa).

A disordered region spans residues 72–93; the sequence is GEFSPTRTYRGHNKKDKKMQKK. Over residues 80 to 93 the composition is skewed to basic residues; that stretch reads YRGHNKKDKKMQKK.

This sequence belongs to the universal ribosomal protein uS19 family.

In terms of biological role, protein S19 forms a complex with S13 that binds strongly to the 16S ribosomal RNA. In Aster yellows witches'-broom phytoplasma (strain AYWB), this protein is Small ribosomal subunit protein uS19.